The following is a 605-amino-acid chain: Capsid scaffolding protein (605 aa).

Catalysis depends on charge relay system residues histidine 48, serine 116, and histidine 139. The segment at 235–275 is disordered; it reads ASDAPDLQKPDKALQSPPPASTDPDTMLSGNAGEGATACGG. The tract at residues 281–300 is interaction with pAP; the sequence is QDLISVPRNTFMTLLQTNLD. Disordered regions lie at residues 403–432 and 489–588; these read DYVPAPSRSNKRKRDPEEDEEGGGLFPGED and PHQS…KSVS. The short motif at 410 to 416 is the Nuclear localization signal element; the sequence is RSNKRKR. The span at 568–579 shows a compositional bias: polar residues; it reads ASASGVAQSKEP. Residues 585 to 605 are interaction with major capsid protein; sequence KSVSAHLKSIFCEELLNKRVA.

The protein belongs to the herpesviridae capsid scaffolding protein family. As to quaternary structure, homomultimer. Interacts with major capsid protein. In terms of assembly, exists in a monomer-dimer equilibrium with the dimer being the active species. Post-translationally, capsid scaffolding protein is cleaved by assemblin after formation of the spherical procapsid. As a result, the capsid obtains its mature, icosahedral shape. Cleavages occur at two or more sites: release (R-site) and maturation (M-site).

It is found in the host cytoplasm. Its subcellular location is the host nucleus. The catalysed reaction is Cleaves -Ala-|-Ser- and -Ala-|-Ala- bonds in the scaffold protein.. Acts as a scaffold protein by binding major capsid protein in the cytoplasm, inducing the nuclear localization of both proteins. Multimerizes in the nucleus such as major capsid protein forms the icosahedral T=16 capsid. Autocatalytic cleavage releases the assembly protein, and subsequently abolishes interaction with major capsid protein. Cleavages products are evicted from the capsid before or during DNA packaging. Functionally, protease that plays an essential role in virion assembly within the nucleus. Catalyzes the cleavage of the assembly protein after formation of the spherical procapsid. By that cleavage, the capsid matures and gains its icosahedral shape. The cleavage sites seem to include -Ala-Ser-, -Ala-Ala-, as well as Ala-Thr bonds. Assemblin and cleavages products are evicted from the capsid before or during DNA packaging. In terms of biological role, plays a major role in capsid assembly. Acts as a scaffold protein by binding major capsid protein. Multimerizes in the nucleus such as major capsid protein forms the icosahedral T=16 capsid. Cleaved by assemblin after capsid completion. The cleavages products are evicted from the capsid before or during DNA packaging. This chain is Capsid scaffolding protein, found in Epstein-Barr virus (strain AG876) (HHV-4).